A 405-amino-acid chain; its full sequence is Histidine decarboxylase (405 aa).

Substrate is bound at residue H121. K234 bears the N6-(pyridoxal phosphate)lysine mark.

The protein belongs to the group II decarboxylase family. As to quaternary structure, homotetramer. Requires pyridoxal 5'-phosphate as cofactor.

The enzyme catalyses L-histidine + H(+) = histamine + CO2. It functions in the pathway siderophore biosynthesis; pseudomonine biosynthesis. The protein is Histidine decarboxylase of Pseudomonas fluorescens.